We begin with the raw amino-acid sequence, 398 residues long: Aldo-keto reductase ausK (398 aa).

D76 contacts NADP(+). Y81 functions as the Proton donor in the catalytic mechanism. H156 is a substrate binding site. Residues C186–N187, Q212, D241–R251, and R317–N325 each bind NADP(+).

Belongs to the aldo/keto reductase family. Aldo/keto reductase 2 subfamily. In terms of assembly, homodimer.

It functions in the pathway secondary metabolite biosynthesis; terpenoid biosynthesis. Its function is as follows. Aldo-keto reductase; part of the gene cluster B that mediates the biosynthesis of austinol and dehydroaustinol, two fungal meroterpenoids. The first step of the pathway is the synthesis of 3,5-dimethylorsellinic acid by the polyketide synthase ausA. 3,5-dimethylorsellinic acid is then prenylated by the polyprenyl transferase ausN. Further epoxidation by the FAD-dependent monooxygenase ausM and cyclization by the probable terpene cyclase ausL lead to the formation of protoaustinoid A. Protoaustinoid A is then oxidized to spiro-lactone preaustinoid A3 by the combined action of the FAD-binding monooxygenases ausB and ausC, and the dioxygenase ausE. Acid-catalyzed keto-rearrangement and ring contraction of the tetraketide portion of preaustinoid A3 by ausJ lead to the formation of preaustinoid A4. The aldo-keto reductase ausK, with the help of ausH, is involved in the next step by transforming preaustinoid A4 into isoaustinone which is in turn hydroxylated by the P450 monooxygenase ausI to form austinolide. Finally, the cytochrome P450 monooxygenase ausG modifies austinolide to austinol. Austinol can be further modified to dehydroaustinol which forms a diffusible complex with diorcinol that initiates conidiation. Due to genetic rearrangements of the clusters and the subsequent loss of some enzymes, the end products of the Emericella nidulans austinoid biosynthesis clusters are austinol and dehydroaustinol, even if additional enzymes, such as the O-acetyltransferase ausQ and the cytochrome P450 monooxygenase ausR are still functional. This Emericella nidulans (strain FGSC A4 / ATCC 38163 / CBS 112.46 / NRRL 194 / M139) (Aspergillus nidulans) protein is Aldo-keto reductase ausK.